The following is a 47-amino-acid chain: Gas vesicle protein A (47 aa).

This sequence belongs to the gas vesicle GvpA family. In terms of assembly, the gas vesicle shell is 2 nm thick and consists of a single layer of this protein. It forms helical ribs nearly perpendicular to the long axis of the vesicle.

The protein localises to the gas vesicle shell. Gas vesicles are hollow, gas filled proteinaceous nanostructures found in some microorganisms. During planktonic growth they allow positioning of the organism at a favorable depth for light or nutrient acquisition. GvpA forms the protein shell. The chain is Gas vesicle protein A from Dactylococcopsis salina (Myxobaktron salinum).